Consider the following 603-residue polypeptide: Prostaglandin G/H synthase 2 (603 aa).

An N-terminal signal peptide occupies residues 1-17 (MLLPCALLAALLAAGHA). Residues 18-55 (ANPCCSLPCQNRGVCMTTGFDRYECDCTRTGYYGENCT) enclose the EGF-like domain. 4 disulfide bridges follow: C21–C32, C22–C145, C26–C42, and C44–C54. N53 and N90 each carry an N-linked (GlcNAc...) asparagine glycan. R106 contacts substrate. N-linked (GlcNAc...) asparagine glycosylation is present at N130. The active-site Proton acceptor is the H193. Residue Y341 participates in substrate binding. Residue Y371 is the For cyclooxygenase activity of the active site. H374 is a binding site for heme b. C555 and C561 form a disulfide bridge.

It belongs to the prostaglandin G/H synthase family. Homodimer. The cofactor is heme b.

The protein resides in the microsome membrane. The protein localises to the endoplasmic reticulum membrane. It carries out the reaction (5Z,8Z,11Z,14Z)-eicosatetraenoate + AH2 + 2 O2 = prostaglandin H2 + A + H2O. The catalysed reaction is (9Z,12Z)-octadecadienoate + AH2 + O2 = (9R)-hydroxy-(10E,12Z)-octadecadienoate + A + H2O. The enzyme catalyses (9Z,12Z)-octadecadienoate + AH2 + O2 = (9S)-hydroxy-(10E,12Z)-octadecadienoate + A + H2O. It catalyses the reaction (9Z,12Z)-octadecadienoate + AH2 + O2 = (13S)-hydroxy-(9Z,11E)-octadecadienoate + A + H2O. It carries out the reaction (9Z,12Z)-octadecadienoate + AH2 + O2 = (13R)-hydroxy-(9Z,11E)-octadecadienoate + A + H2O. It participates in lipid metabolism; prostaglandin biosynthesis. Functionally, dual cyclooxygenase and peroxidase in the biosynthesis pathway of prostanoids, a class of C20 oxylipins mainly derived from arachidonate ((5Z,8Z,11Z,14Z)-eicosatetraenoate, AA, C20:4(n-6)), with a particular role in the inflammatory response. The cyclooxygenase activity oxygenates AA to the hydroperoxy endoperoxide prostaglandin G2 (PGG2), and the peroxidase activity reduces PGG2 to the hydroxy endoperoxide prostaglandin H2 (PGH2), the precursor of all 2-series prostaglandins and thromboxanes. This complex transformation is initiated by abstraction of hydrogen at carbon 13 (with S-stereochemistry), followed by insertion of molecular O2 to form the endoperoxide bridge between carbon 9 and 11 that defines prostaglandins. The insertion of a second molecule of O2 (bis-oxygenase activity) yields a hydroperoxy group in PGG2 that is then reduced to PGH2 by two electrons. Similarly catalyzes successive cyclooxygenation and peroxidation of dihomo-gamma-linoleate (DGLA, C20:3(n-6)) and eicosapentaenoate (EPA, C20:5(n-3)) to corresponding PGH1 and PGH3, the precursors of 1- and 3-series prostaglandins. In an alternative pathway of prostanoid biosynthesis, converts 2-arachidonoyl lysophopholipids to prostanoid lysophopholipids, which are then hydrolyzed by intracellular phospholipases to release free prostanoids. Metabolizes 2-arachidonoyl glycerol yielding the glyceryl ester of PGH2, a process that can contribute to pain response. Generates lipid mediators from n-3 and n-6 polyunsaturated fatty acids (PUFAs) via a lipoxygenase-type mechanism. Oxygenates PUFAs to hydroperoxy compounds and then reduces them to corresponding alcohols. Plays a role in the generation of resolution phase interaction products (resolvins) during both sterile and infectious inflammation. Metabolizes docosahexaenoate (DHA, C22:6(n-3)) to 17R-HDHA, a precursor of the D-series resolvins (RvDs). As a component of the biosynthetic pathway of E-series resolvins (RvEs), converts eicosapentaenoate (EPA, C20:5(n-3)) primarily to 18S-HEPE that is further metabolized by ALOX5 and LTA4H to generate 18S-RvE1 and 18S-RvE2. In vascular endothelial cells, converts docosapentaenoate (DPA, C22:5(n-3)) to 13R-HDPA, a precursor for 13-series resolvins (RvTs) shown to activate macrophage phagocytosis during bacterial infection. In activated leukocytes, contributes to oxygenation of hydroxyeicosatetraenoates (HETE) to diHETES (5,15-diHETE and 5,11-diHETE). Can also use linoleate (LA, (9Z,12Z)-octadecadienoate, C18:2(n-6)) as substrate and produce hydroxyoctadecadienoates (HODEs) in a regio- and stereospecific manner, being (9R)-HODE ((9R)-hydroxy-(10E,12Z)-octadecadienoate) and (13S)-HODE ((13S)-hydroxy-(9Z,11E)-octadecadienoate) its major products. During neuroinflammation, plays a role in neuronal secretion of specialized preresolving mediators (SPMs) 15R-lipoxin A4 that regulates phagocytic microglia. The polypeptide is Prostaglandin G/H synthase 2 (PTGS2) (Gallus gallus (Chicken)).